The primary structure comprises 384 residues: BTB and MATH domain-containing protein 34 (384 aa).

The stretch at Leu41 to Lys127 forms a coiled coil. An MATH domain is found at Glu167 to Ile277. Positions Ser317–Arg380 constitute a BTB domain.

This is BTB and MATH domain-containing protein 34 (bath-34) from Caenorhabditis elegans.